The following is a 92-amino-acid chain: Small ribosomal subunit protein uS19c (92 aa).

It belongs to the universal ribosomal protein uS19 family.

The protein localises to the plastid. Its subcellular location is the chloroplast. Protein S19 forms a complex with S13 that binds strongly to the 16S ribosomal RNA. The chain is Small ribosomal subunit protein uS19c from Cyanidium caldarium (Red alga).